The sequence spans 682 residues: MSRKQLALFEPTLVVQALKEAVKKLNPQAQWRNPVMFIVWIGSLLTTCISIAMASDVMPGNALFSAAISGWLWVTVLFANFAEALAEGRSKAQANSLKGVKKTAFARKLREPKYGAAADKVPADQLRKGDIVLVEASDIIPCDGEVIEGGASVDESAITGESAPVIRESGGDFASVTGGTRILSDWLVIECSVNPGETFLDRMIAMVEGAQRRKTPNEIALTILLIALTIVFLLATATLWPFSAWGGNAVSVTVLVALLVCLIPTTIGGLLSAIGVAGMSRMLGANVIATSGRAVEAAGDVDVLLLDKTGTITLGNRQASEFIPAQGVEEKALADAAQLASLADETPEGRSIVILAKQRFNLRERDVQSLHATFVPFTAQSRMSGINIDNRMIRKGSVDAIRRHVEANGGHFPADVDQKVDQVARQGATPLVVVEGSRVLGVIALKDIVKGGIKERFAQLRKMGIKTVMITGDNRLTAAAIAAEAGVDDFLAEATPEAKLALIRQYQAEGRLVAMTGDGTNDAPALAQADVAVAMNSGTQAAKEAGNMVDLDSNPTKLIEVVHIGKQMLMTRGSLTTFSIANDVAKYFAIIPAAFAATYPQLNALNIMRLHSPDSAILSAVIFNALIIVFLIPLALKGVSYKPLTASAMLRRNLWIYGLGGLLVPFIGIKVIDLLLTVCGLV.

The next 4 helical transmembrane spans lie at 34–54, 62–82, 219–239, and 254–274; these read PVMF…IAMA, ALFS…ANFA, IALT…TATL, and VLVA…LSAI. The 4-aspartylphosphate intermediate role is filled by Asp-307. ATP is bound by residues Asp-344, Glu-348, 377–384, and Lys-395; that span reads FTAQSRMS. Positions 518 and 522 each coordinate Mg(2+). 3 helical membrane passes run 588-608, 616-636, and 656-676; these read FAII…LNIM, AILS…PLAL, and IYGL…DLLL.

It belongs to the cation transport ATPase (P-type) (TC 3.A.3) family. Type IA subfamily. In terms of assembly, the system is composed of three essential subunits: KdpA, KdpB and KdpC.

The protein resides in the cell inner membrane. The enzyme catalyses K(+)(out) + ATP + H2O = K(+)(in) + ADP + phosphate + H(+). Part of the high-affinity ATP-driven potassium transport (or Kdp) system, which catalyzes the hydrolysis of ATP coupled with the electrogenic transport of potassium into the cytoplasm. This subunit is responsible for energy coupling to the transport system and for the release of the potassium ions to the cytoplasm. This Escherichia coli (strain UTI89 / UPEC) protein is Potassium-transporting ATPase ATP-binding subunit.